The following is a 151-amino-acid chain: MGIGACALARSPVKIKTFGLGSCVVITLYDRQERIGGLVHTMLPSISDARIKDKPFKYTDSGIEHLATEILREGSPRKRFEAKLVGGAHMFENRNLNIGERNIKYAKNTLEKFEIPIISEDTGKNYGRTITLDTSTGDLLIRTILRADKII.

Belongs to the CheD family.

The catalysed reaction is L-glutaminyl-[protein] + H2O = L-glutamyl-[protein] + NH4(+). Functionally, probably deamidates glutamine residues to glutamate on methyl-accepting chemotaxis receptors (MCPs), playing an important role in chemotaxis. This chain is Probable chemoreceptor glutamine deamidase CheD, found in Methanosarcina barkeri (strain Fusaro / DSM 804).